Consider the following 228-residue polypeptide: Lipoprotein-releasing system ATP-binding protein LolD (228 aa).

The ABC transporter domain occupies 6 to 225; that stretch reads LEAKDVYKHF…ILHMQDGLWV (220 aa). Residue 42 to 49 participates in ATP binding; it reads GASGSGKS.

Belongs to the ABC transporter superfamily. Lipoprotein translocase (TC 3.A.1.125) family. As to quaternary structure, the complex is composed of two ATP-binding proteins (LolD) and two transmembrane proteins (LolC and LolE).

The protein resides in the cell inner membrane. Its function is as follows. Part of the ABC transporter complex LolCDE involved in the translocation of mature outer membrane-directed lipoproteins, from the inner membrane to the periplasmic chaperone, LolA. Responsible for the formation of the LolA-lipoprotein complex in an ATP-dependent manner. This Acinetobacter baylyi (strain ATCC 33305 / BD413 / ADP1) protein is Lipoprotein-releasing system ATP-binding protein LolD.